A 163-amino-acid polypeptide reads, in one-letter code: Small ribosomal subunit protein eS10A (163 aa).

The interval 92-163 (LTQTTRSNAV…GFGRASRYDN (72 aa)) is disordered. Gly residues predominate over residues 105-116 (GGPGGPGGGFGG).

The protein belongs to the eukaryotic ribosomal protein eS10 family.

The protein resides in the cytoplasm. In Drosophila melanogaster (Fruit fly), this protein is Small ribosomal subunit protein eS10A (RpS10a).